Reading from the N-terminus, the 20-residue chain is Cytochrome c oxidase subunit 5A-1, mitochondrial (20 aa).

Belongs to the cytochrome c oxidase subunit 5A family. In terms of assembly, component of the cytochrome c oxidase (complex IV, CIV), a multisubunit enzyme composed of 14 subunits. The complex is composed of a catalytic core of 3 subunits MT-CO1, MT-CO2 and MT-CO3, encoded in the mitochondrial DNA, and 11 supernumerary subunits COX4I, COX5A, COX5B, COX6A, COX6B, COX6C, COX7A, COX7B, COX7C, COX8 and NDUFA4, which are encoded in the nuclear genome. The complex exists as a monomer or a dimer and forms supercomplexes (SCs) in the inner mitochondrial membrane with NADH-ubiquinone oxidoreductase (complex I, CI) and ubiquinol-cytochrome c oxidoreductase (cytochrome b-c1 complex, complex III, CIII), resulting in different assemblies (supercomplex SCI(1)III(2)IV(1) and megacomplex MCI(2)III(2)IV(2)). Interacts with AFG1L. Interacts with RAB5IF.

The protein resides in the mitochondrion inner membrane. The protein operates within energy metabolism; oxidative phosphorylation. In terms of biological role, component of the cytochrome c oxidase, the last enzyme in the mitochondrial electron transport chain which drives oxidative phosphorylation. The respiratory chain contains 3 multisubunit complexes succinate dehydrogenase (complex II, CII), ubiquinol-cytochrome c oxidoreductase (cytochrome b-c1 complex, complex III, CIII) and cytochrome c oxidase (complex IV, CIV), that cooperate to transfer electrons derived from NADH and succinate to molecular oxygen, creating an electrochemical gradient over the inner membrane that drives transmembrane transport and the ATP synthase. Cytochrome c oxidase is the component of the respiratory chain that catalyzes the reduction of oxygen to water. Electrons originating from reduced cytochrome c in the intermembrane space (IMS) are transferred via the dinuclear copper A center (CU(A)) of subunit 2 and heme A of subunit 1 to the active site in subunit 1, a binuclear center (BNC) formed by heme A3 and copper B (CU(B)). The BNC reduces molecular oxygen to 2 water molecules using 4 electrons from cytochrome c in the IMS and 4 protons from the mitochondrial matrix. The polypeptide is Cytochrome c oxidase subunit 5A-1, mitochondrial (Thunnus obesus (Bigeye tuna)).